The chain runs to 221 residues: Uracil-DNA glycosylase 1 (221 aa).

The Proton acceptor role is filled by Asp61.

The protein belongs to the uracil-DNA glycosylase (UDG) superfamily. UNG family.

It localises to the cytoplasm. It catalyses the reaction Hydrolyzes single-stranded DNA or mismatched double-stranded DNA and polynucleotides, releasing free uracil.. Its function is as follows. Excises uracil residues from the DNA which can arise as a result of misincorporation of dUMP residues by DNA polymerase or due to deamination of cytosine. The polypeptide is Uracil-DNA glycosylase 1 (Listeria monocytogenes serotype 4b (strain F2365)).